We begin with the raw amino-acid sequence, 144 residues long: Large ribosomal subunit protein uL15 (144 aa).

The segment at 1-52 is disordered; it reads MRLNTISSAPGAKQAEKRVGRGIGSGWGKTCGRGHKGQKSRSGGFHKVGFEG. The span at 21–31 shows a compositional bias: gly residues; the sequence is RGIGSGWGKTC.

The protein belongs to the universal ribosomal protein uL15 family. In terms of assembly, part of the 50S ribosomal subunit.

Its function is as follows. Binds to the 23S rRNA. The chain is Large ribosomal subunit protein uL15 from Nitrosococcus oceani (strain ATCC 19707 / BCRC 17464 / JCM 30415 / NCIMB 11848 / C-107).